A 437-amino-acid polypeptide reads, in one-letter code: Adenylyltransferase and sulfurtransferase MOCS3 (437 aa).

ATP contacts are provided by residues glycine 82, aspartate 103, 110–114 (TNLHR), lysine 127, and 171–172 (DN). The Zn(2+) site is built by cysteine 212 and cysteine 215. Catalysis depends on cysteine 229, which acts as the Glycyl thioester intermediate; for adenylyltransferase activity. Cysteine 287 and cysteine 290 together coordinate Zn(2+). In terms of domain architecture, Rhodanese spans 337–435 (SNVPHLLVDV…WTHNIDPEFP (99 aa)). The Cysteine persulfide intermediate; for sulfurtransferase activity role is filled by cysteine 391.

The protein in the N-terminal section; belongs to the HesA/MoeB/ThiF family. UBA4 subfamily. It depends on Zn(2+) as a cofactor.

The protein resides in the cytoplasm. Its subcellular location is the cytosol. It carries out the reaction [molybdopterin-synthase sulfur-carrier protein]-C-terminal Gly-Gly + ATP + H(+) = [molybdopterin-synthase sulfur-carrier protein]-C-terminal Gly-Gly-AMP + diphosphate. The catalysed reaction is [molybdopterin-synthase sulfur-carrier protein]-C-terminal Gly-Gly-AMP + S-sulfanyl-L-cysteinyl-[cysteine desulfurase] + AH2 = [molybdopterin-synthase sulfur-carrier protein]-C-terminal-Gly-aminoethanethioate + L-cysteinyl-[cysteine desulfurase] + A + AMP + 2 H(+). The protein operates within tRNA modification; 5-methoxycarbonylmethyl-2-thiouridine-tRNA biosynthesis. It functions in the pathway cofactor biosynthesis; molybdopterin biosynthesis. In terms of biological role, plays a central role in 2-thiolation of mcm(5)S(2)U at tRNA wobble positions of cytosolic tRNA(Lys), tRNA(Glu) and tRNA(Gln). Also essential during biosynthesis of the molybdenum cofactor. Acts by mediating the C-terminal thiocarboxylation of sulfur carriers URM1 and MOCS2A. Its N-terminus first activates URM1 and MOCS2A as acyl-adenylates (-COAMP), then the persulfide sulfur on the catalytic cysteine is transferred to URM1 and MOCS2A to form thiocarboxylation (-COSH) of their C-terminus. The reaction probably involves hydrogen sulfide that is generated from the persulfide intermediate and that acts as a nucleophile towards URM1 and MOCS2A. Subsequently, a transient disulfide bond is formed. Does not use thiosulfate as sulfur donor; NFS1 probably acting as a sulfur donor for thiocarboxylation reactions. In Aedes aegypti (Yellowfever mosquito), this protein is Adenylyltransferase and sulfurtransferase MOCS3.